The primary structure comprises 451 residues: Gamma-aminobutyric acid receptor subunit alpha-2 (451 aa).

An N-terminal signal peptide occupies residues 1–28; the sequence is MKTKLSTCNVWSLLLVLLVWDPVRLVLA. Topologically, residues 29 to 249 are extracellular; that stretch reads NIQEDEAKNN…MTAHFHLKRK (221 aa). A glycan (N-linked (GlcNAc...) asparagine) is linked at N38. R94 lines the 4-aminobutanoate pocket. N-linked (GlcNAc...) asparagine glycosylation occurs at N138. Residue T157 coordinates 4-aminobutanoate. A disulfide bond links C166 and C180. Residues 250–270 form a helical membrane-spanning segment; the sequence is IGYFVIQTYLPCIMTVILSQV. Residues 271-280 are Cytoplasmic-facing; that stretch reads SFWLNRESVP. A helical membrane pass occupies residues 281–300; the sequence is ARTVFGVTTVLTMTTLSISA. The Extracellular segment spans residues 301–311; that stretch reads RNSLPKVAYAT. Residues 312–332 traverse the membrane as a helical segment; it reads AMDWFIAVCYAFVFSALIEFA. At 333–420 the chain is on the cytoplasmic side; it reads TVNYFTKRGW…FNSVSKIDRM (88 aa). Residues 389-408 form a disordered region; the sequence is KSATTPEPNKKPENKPAEAK. Positions 396–408 are enriched in basic and acidic residues; it reads PNKKPENKPAEAK. A helical transmembrane segment spans residues 421 to 441; that stretch reads SRIVFPVLFGTFNLVYWATYL. The Extracellular segment spans residues 442 to 451; the sequence is NREPVLGVSP.

This sequence belongs to the ligand-gated ion channel (TC 1.A.9) family. Gamma-aminobutyric acid receptor (TC 1.A.9.5) subfamily. GABRA2 sub-subfamily. Heteropentamer, formed by a combination of alpha (GABRA1-6), beta (GABRB1-3), gamma (GABRG1-3), delta (GABRD), epsilon (GABRE), rho (GABRR1-3), pi (GABRP) and theta (GABRQ) subunits, each subunit exhibiting distinct physiological and pharmacological properties. Interacts with UBQLN1. Interacts with KIF21B. Interacts with LHFPL4. Interacts with SHISA7; interaction leads to the regulation of GABA(A) receptor trafficking, channel deactivation kinetics and pharmacology. Post-translationally, glycosylated.

It localises to the postsynaptic cell membrane. It is found in the cell membrane. The protein resides in the cytoplasmic vesicle membrane. The protein localises to the cell projection. Its subcellular location is the dendrite. The catalysed reaction is chloride(in) = chloride(out). Its activity is regulated as follows. Activated by pentobarbital. Inhibited by the antagonist bicuculline. In terms of biological role, alpha subunit of the heteropentameric ligand-gated chloride channel gated by gamma-aminobutyric acid (GABA), a major inhibitory neurotransmitter in the brain. GABA-gated chloride channels, also named GABA(A) receptors (GABAAR), consist of five subunits arranged around a central pore and contain GABA active binding site(s) located at the alpha and beta subunit interface(s). When activated by GABA, GABAARs selectively allow the flow of chloride anions across the cell membrane down their electrochemical gradient. Chloride influx into the postsynaptic neuron following GABAAR opening decreases the neuron ability to generate a new action potential, thereby reducing nerve transmission. The alpha-2 subunit exhibits synaptogenic activity together with beta-2 and very little to no activity together with beta-3, the gamma-2 subunit being necessary but not sufficient to induce rapid synaptic contacts formation. This chain is Gamma-aminobutyric acid receptor subunit alpha-2, found in Mus musculus (Mouse).